Here is a 247-residue protein sequence, read N- to C-terminus: Flavin-dependent thymidylate synthase (247 aa).

Positions 1–237 constitute a ThyX domain; that stretch reads MRVRLLEATE…PHTFEYYDAE (237 aa). DUMP is bound by residues 85 to 88, 98 to 100, and arginine 176; these read QLTR and SMR. 88-90 serves as a coordination point for FAD; it reads RHR. A ThyX motif motif is present at residues 88–98; the sequence is RHRHASFDVQS. FAD is bound by residues 192 to 194 and histidine 198; that span reads NPR. Arginine 203 contacts dUMP. Arginine 203 functions as the Involved in ionization of N3 of dUMP, leading to its activation in the catalytic mechanism.

It belongs to the thymidylate synthase ThyX family. In terms of assembly, homotetramer. FAD is required as a cofactor.

It catalyses the reaction dUMP + (6R)-5,10-methylene-5,6,7,8-tetrahydrofolate + NADPH + H(+) = dTMP + (6S)-5,6,7,8-tetrahydrofolate + NADP(+). The protein operates within pyrimidine metabolism; dTTP biosynthesis. Catalyzes the reductive methylation of 2'-deoxyuridine-5'-monophosphate (dUMP) to 2'-deoxythymidine-5'-monophosphate (dTMP) while utilizing 5,10-methylenetetrahydrofolate (mTHF) as the methyl donor, and NADPH and FADH(2) as the reductant. The protein is Flavin-dependent thymidylate synthase of Halobacterium salinarum (strain ATCC 700922 / JCM 11081 / NRC-1) (Halobacterium halobium).